The chain runs to 509 residues: Nucleolar protein 12 (509 aa).

The tract at residues M1–T152 is disordered. The span at G28–K40 shows a compositional bias: basic and acidic residues. Positions V33–E114 form a coiled coil. The span at M41–E85 shows a compositional bias: acidic residues. The span at L112–M122 shows a compositional bias: basic and acidic residues. Residues P136–E150 are compositionally biased toward acidic residues. RRM domains lie at Y168–H266 and R274–S359. 2 disordered regions span residues S345–A403 and D419–N509. Residues T347–S359 are compositionally biased toward basic residues. The segment covering H361–H389 has biased composition (basic and acidic residues). Positions R426 to K436 are enriched in basic residues. Basic and acidic residues-rich tracts occupy residues N437 to K451 and F478 to K503.

The protein belongs to the RRM RBM34 family.

It localises to the nucleus. The protein resides in the nucleolus. Its function is as follows. Involved in pre-25S rRNA processing. This chain is Nucleolar protein 12 (NOP12), found in Yarrowia lipolytica (strain CLIB 122 / E 150) (Yeast).